We begin with the raw amino-acid sequence, 360 residues long: Inward rectifier potassium channel 13 (360 aa).

Topologically, residues Met1 to Asp50 are cytoplasmic. Residues Met51–Ala77 traverse the membrane as a helical segment. Topologically, residues Val78–Ser105 are extracellular. Positions Phe106 to Tyr122 form an intramembrane region, helical; Pore-forming. Residues Thr119–Thr124 carry the Selectivity filter motif. Residues Gly123 to Cys131 lie on the Extracellular side of the membrane. Residues Pro132–Val157 form a helical membrane-spanning segment. Over Ala158–Glu360 the chain is Cytoplasmic. A Phosphoserine; by PKC modification is found at Ser201. Ser287 is subject to Phosphoserine; by PKA.

The protein belongs to the inward rectifier-type potassium channel (TC 1.A.2.1) family. KCNJ13 subfamily. As to quaternary structure, homotetramer. Interacts with RAB28; the interaction may facilitate cone outer segments phagocytosis. Phosphorylation at Ser-201 by PKC strongly inhibits ionic currents, while phosphorylation at Ser-287 by PKA increases them.

It localises to the membrane. It is found in the cell membrane. It catalyses the reaction K(+)(in) = K(+)(out). Inhibited by Ba(2+) and Cs(+), although sensitivity to those inhibitors is much lower than in other Kir channels. Functionally, inward rectifier potassium channels are characterized by a greater tendency to allow potassium to flow into the cell rather than out of it. Their voltage dependence is regulated by the concentration of extracellular potassium; as external potassium is raised, the voltage range of the channel opening shifts to more positive voltages. The inward rectification is mainly due to the blockage of outward current by internal magnesium. KCNJ13 has a very low single channel conductance, low sensitivity to block by external barium and cesium, and no dependence of its inward rectification properties on the internal blocking particle magnesium. This is Inward rectifier potassium channel 13 (Kcnj13) from Rattus norvegicus (Rat).